The sequence spans 443 residues: MSVVTERYSRSQADYAAAREVIPGGVNSPVRAFRGVGGIPIFFERGQGAYVWDVDGNRYIDYVLSWGPLLLGHAHPAVVEAITLQAQRGTSFGAPTELETELARLVIELVPSIEQIRFVNSGTEATMSALRLARAATGRRLIVKFNGCYHGHADMLLVQAGSGVATLGLPDSPGVPPSVAAETITIEYNDLDAAAALFANRGAEIAAVIVEPIAANMGFVLPKPGFLSGLRELTQTHGAIFILDEVMTGFRVAAGGAQALWGLDPDLTCLGKVIGGGLPVGAYAGKRQLMQLVAPAGPMYQAGTLSGNPLAMTAGLTTLRTAFGGDAGAFQQAVTRTARLADGLRMLGERYRIPVQVGNVGTMFGCYFLRQEGSQITSYAEAKAYADSQRYARFFWAMADQGIYLAPSQFEAGFLSTAHSDADIDETLAAAEVAFAGLVSSAE.

Lysine 272 bears the N6-(pyridoxal phosphate)lysine mark.

It belongs to the class-III pyridoxal-phosphate-dependent aminotransferase family. HemL subfamily. As to quaternary structure, homodimer. Pyridoxal 5'-phosphate serves as cofactor.

Its subcellular location is the cytoplasm. It carries out the reaction (S)-4-amino-5-oxopentanoate = 5-aminolevulinate. The protein operates within porphyrin-containing compound metabolism; protoporphyrin-IX biosynthesis; 5-aminolevulinate from L-glutamyl-tRNA(Glu): step 2/2. It participates in porphyrin-containing compound metabolism; chlorophyll biosynthesis. The polypeptide is Glutamate-1-semialdehyde 2,1-aminomutase (Chloroflexus aurantiacus (strain ATCC 29366 / DSM 635 / J-10-fl)).